The sequence spans 312 residues: Ribose-phosphate pyrophosphokinase (312 aa).

Residues 34–36 and 93–94 contribute to the ATP site; these read DQE and RQ. The Mg(2+) site is built by His-127 and Asp-167. The active site involves Lys-191. D-ribose 5-phosphate contacts are provided by residues Arg-193, Asp-217, and 221-225; that span reads DSGGT.

It belongs to the ribose-phosphate pyrophosphokinase family. Class I subfamily. In terms of assembly, homohexamer. Mg(2+) serves as cofactor.

The protein localises to the cytoplasm. The enzyme catalyses D-ribose 5-phosphate + ATP = 5-phospho-alpha-D-ribose 1-diphosphate + AMP + H(+). It functions in the pathway metabolic intermediate biosynthesis; 5-phospho-alpha-D-ribose 1-diphosphate biosynthesis; 5-phospho-alpha-D-ribose 1-diphosphate from D-ribose 5-phosphate (route I): step 1/1. Its function is as follows. Involved in the biosynthesis of the central metabolite phospho-alpha-D-ribosyl-1-pyrophosphate (PRPP) via the transfer of pyrophosphoryl group from ATP to 1-hydroxyl of ribose-5-phosphate (Rib-5-P). The chain is Ribose-phosphate pyrophosphokinase from Hyphomonas neptunium (strain ATCC 15444).